The following is a 448-amino-acid chain: N-succinylarginine dihydrolase (448 aa).

Substrate-binding positions include 19 to 28 (AGLSSGNIAS), asparagine 110, and 137 to 138 (HR). The active site involves glutamate 174. Residue arginine 216 coordinates substrate. Residue histidine 252 is part of the active site. Substrate-binding residues include aspartate 254 and asparagine 366. Cysteine 372 serves as the catalytic Nucleophile.

This sequence belongs to the succinylarginine dihydrolase family. As to quaternary structure, homodimer.

It catalyses the reaction N(2)-succinyl-L-arginine + 2 H2O + 2 H(+) = N(2)-succinyl-L-ornithine + 2 NH4(+) + CO2. The protein operates within amino-acid degradation; L-arginine degradation via AST pathway; L-glutamate and succinate from L-arginine: step 2/5. Catalyzes the hydrolysis of N(2)-succinylarginine into N(2)-succinylornithine, ammonia and CO(2). This Legionella pneumophila (strain Lens) protein is N-succinylarginine dihydrolase.